Here is a 123-residue protein sequence, read N- to C-terminus: Large ribosomal subunit protein uL14 (123 aa).

This sequence belongs to the universal ribosomal protein uL14 family. As to quaternary structure, part of the 50S ribosomal subunit. Forms a cluster with proteins L3 and L19. In the 70S ribosome, L14 and L19 interact and together make contacts with the 16S rRNA in bridges B5 and B8.

In terms of biological role, binds to 23S rRNA. Forms part of two intersubunit bridges in the 70S ribosome. This Serratia proteamaculans (strain 568) protein is Large ribosomal subunit protein uL14.